The chain runs to 684 residues: Glycine--tRNA ligase beta subunit (684 aa).

The protein belongs to the class-II aminoacyl-tRNA synthetase family. Tetramer of two alpha and two beta subunits.

It localises to the cytoplasm. The catalysed reaction is tRNA(Gly) + glycine + ATP = glycyl-tRNA(Gly) + AMP + diphosphate. This Pseudomonas fluorescens (strain SBW25) protein is Glycine--tRNA ligase beta subunit.